A 473-amino-acid chain; its full sequence is MAP kinase-activated protein kinase 5 (473 aa).

Residues 22–304 (INWTQKLGAG…IEGVLDHPWL (283 aa)) enclose the Protein kinase domain. ATP contacts are provided by residues 28-36 (LGAGISGPV) and Lys-51. The residue at position 115 (Ser-115) is a Phosphoserine; by PKA. Residue Asp-148 is the Proton acceptor of the active site. The residue at position 182 (Thr-182) is a Phosphothreonine; by MAPK11, MAPK14, MAPK4, MAPK6 and PKA. A phosphoserine mark is found at Ser-212 and Ser-354. A coiled-coil region spans residues 409–440 (ENEDEKLNEVMQEAWKYNRECKLLRDTLQSFS).

It belongs to the protein kinase superfamily. CAMK Ser/Thr protein kinase family. Interacts with ERK3/MAPK6 and ERK4/MAPK4 (via FRIEDE motif); the interaction is direct. Interacts with YWHAE; the interaction prevents phosphorylation of HSP27/HSPB1 leading to disrupt F-actin polymerization. Interacts with SQSTM1. Phosphorylated on Thr-182 ERK3/MAPK6 or ERK4/MAPK4; which is the regulatory phosphorylation site and is located on the T-loop/loop 12, leading to activation. Phosphorylation at Thr-182 by p38-alpha/MAPK14, p38-beta/MAPK11 is subject to debate. Phosphorylated at Ser-115 by PKA/PRKACA, leading to localization to the cytoplasm. Autophosphorylated. Expressed ubiquitously.

The protein localises to the cytoplasm. The protein resides in the nucleus. It carries out the reaction L-seryl-[protein] + ATP = O-phospho-L-seryl-[protein] + ADP + H(+). It catalyses the reaction L-threonyl-[protein] + ATP = O-phospho-L-threonyl-[protein] + ADP + H(+). Its activity is regulated as follows. Activated following phosphorylation at Thr-182 by p38-alpha/MAPK14, p38-beta/MAPK11, ERK2/MAPK1, ERK3/MAPK6, and ERK4/MAPK4. Activated by stress-related extracellular stimuli; such as H(2)O(2), arsenite, anisomycin TNF alpha and also PMA and the calcium ionophore A23187; but to a lesser extent. In vitro, activated by SQSTM1. Inhibited by diterpenoid alkaloid noroxoaconitine. Its function is as follows. Tumor suppressor serine/threonine-protein kinase involved in mTORC1 signaling and post-transcriptional regulation. Phosphorylates FOXO3, ERK3/MAPK6, ERK4/MAPK4, HSP27/HSPB1, p53/TP53 and RHEB. Acts as a tumor suppressor by mediating Ras-induced senescence and phosphorylating p53/TP53. Involved in post-transcriptional regulation of MYC by mediating phosphorylation of FOXO3: phosphorylation of FOXO3 leads to promote nuclear localization of FOXO3, enabling expression of miR-34b and miR-34c, 2 post-transcriptional regulators of MYC that bind to the 3'UTR of MYC transcript and prevent MYC translation. Acts as a negative regulator of mTORC1 signaling by mediating phosphorylation and inhibition of RHEB. Part of the atypical MAPK signaling via its interaction with ERK3/MAPK6 or ERK4/MAPK4: the precise role of the complex formed with ERK3/MAPK6 or ERK4/MAPK4 is still unclear, but the complex follows a complex set of phosphorylation events: upon interaction with atypical MAPK (ERK3/MAPK6 or ERK4/MAPK4), ERK3/MAPK6 (or ERK4/MAPK4) is phosphorylated and then mediates phosphorylation and activation of MAPKAPK5, which in turn phosphorylates ERK3/MAPK6 (or ERK4/MAPK4). Mediates phosphorylation of HSP27/HSPB1 in response to PKA/PRKACA stimulation, inducing F-actin rearrangement. In Homo sapiens (Human), this protein is MAP kinase-activated protein kinase 5 (MAPKAPK5).